Here is a 650-residue protein sequence, read N- to C-terminus: ATP-binding cassette sub-family G member 3 (650 aa).

At 1-387 (MASNNDPTVI…KNFKGFPWVT (387 aa)) the chain is on the cytoplasmic side. One can recognise an ABC transporter domain in the interval 37-279 (LSFHNISYQE…FRSAGYNYES (243 aa)). In terms of domain architecture, ABC transmembrane type-2 spans 381-644 (KGFPWVTVIQ…TITYVQLLQV (264 aa)). Residues 388-408 (VIQAIITVILATAVGTAFRVL) traverse the membrane as a helical segment. Topologically, residues 409–420 (KNDCIEVQMRAG) are extracellular. Residues 421–441 (LLYLLTIFQCITSVSAGELFV) traverse the membrane as a helical segment. The Cytoplasmic portion of the chain corresponds to 442–469 (IDRVRFLHEHTSGYYRVSSYFFGKLLAE). The helical transmembrane segment at 470 to 490 (LIPRRLLPSTVFSLITYVIAG) threads the bilayer. Residues 491 to 498 (VKMSMKCF) are Extracellular-facing. Residues 499 to 519 (FTMICTIMVLAYSASSLPLSI) traverse the membrane as a helical segment. At 520-527 (GAGENAVA) the chain is on the cytoplasmic side. The helical transmembrane segment at 528–548 (VPTLLVTIYFVFMLFFSGLSL) threads the bilayer. Over 549–623 (YSGSFLPKLS…LSSWGFWENH (75 aa)) the chain is Extracellular. The chain crosses the membrane as a helical span at residues 624-644 (LALVCTMIILLTITYVQLLQV). The Cytoplasmic portion of the chain corresponds to 645-648 (KNIR).

This sequence belongs to the ABC transporter superfamily. ABCG family. Eye pigment precursor importer (TC 3.A.1.204) subfamily. As to quaternary structure, may dimerize with another subunit to form a functional transporter. As to expression, highest levels of expression in thymus and spleen. Detected in lung and small intestine.

The protein resides in the membrane. This is ATP-binding cassette sub-family G member 3 (Abcg3) from Mus musculus (Mouse).